Reading from the N-terminus, the 202-residue chain is Dephospho-CoA kinase (202 aa).

Residues 4 to 201 (VVALTGGIAS…QKYLAMSRQN (198 aa)) enclose the DPCK domain. 12–17 (ASGKTT) lines the ATP pocket.

It belongs to the CoaE family.

The protein resides in the cytoplasm. The catalysed reaction is 3'-dephospho-CoA + ATP = ADP + CoA + H(+). It participates in cofactor biosynthesis; coenzyme A biosynthesis; CoA from (R)-pantothenate: step 5/5. Catalyzes the phosphorylation of the 3'-hydroxyl group of dephosphocoenzyme A to form coenzyme A. The sequence is that of Dephospho-CoA kinase from Vibrio cholerae serotype O1 (strain ATCC 39315 / El Tor Inaba N16961).